The primary structure comprises 35 residues: Photosystem II reaction center protein T (35 aa).

Residues 3–23 (ALVYTFLLVSTLGIIFFAIFF) traverse the membrane as a helical segment.

Belongs to the PsbT family. In terms of assembly, PSII is composed of 1 copy each of membrane proteins PsbA, PsbB, PsbC, PsbD, PsbE, PsbF, PsbH, PsbI, PsbJ, PsbK, PsbL, PsbM, PsbT, PsbY, PsbZ, Psb30/Ycf12, at least 3 peripheral proteins of the oxygen-evolving complex and a large number of cofactors. It forms dimeric complexes.

The protein localises to the plastid. It is found in the chloroplast thylakoid membrane. Functionally, found at the monomer-monomer interface of the photosystem II (PS II) dimer, plays a role in assembly and dimerization of PSII. PSII is a light-driven water plastoquinone oxidoreductase, using light energy to abstract electrons from H(2)O, generating a proton gradient subsequently used for ATP formation. This is Photosystem II reaction center protein T from Ginkgo biloba (Ginkgo).